Here is a 553-residue protein sequence, read N- to C-terminus: MTKYVFVTGGVVSSLGKGIAAASLAAILESRGLKVTLLKLDPYINVDPGTMSPFQHGEVFVTEDGAETDLDLGHYERFISTKMRKANNFTTGQIYESVIRKERRGDYLGKTVQVIPHITNEIQAFIERGAASATCGEPDVAIVEIGGTVGDIESLPFLEAARQMSLRLGRNSACFVHLTLVPFIATAGELKTKPTQHSVQKLREIGISPHVLLCRADRPIPDDESKKISLFSNVPEDAVISVWDVDSIYKIPQMLHDQGLDRLICEELRLDPQPADLRMWAALVEKLQNPKHEVTIGMVGKYVDLTESYKSLIEALRHASIHTSTKVNIEYIDSEELETNGTASLAHLDAVLVPGGFGRRGTEGKIAAVRYAREAKVPYLGICLGMQLAVIEFARDVVGLKQANSTEFDPNTPERVVALITEWYDREGKVEKRTEDSDLGGTMRLGSQRCPIKPGTLAEAIYGKDVNERHRHRYEVNNRFVPQLEAGGLVISARTPSEDLPEMMELPSTMHPWFVGVQFHPEFTSTPRDGHPLFKSFVQAALACQQTRAGAKA.

The interval 1–270 (MTKYVFVTGG…DRLICEELRL (270 aa)) is amidoligase domain. Serine 13 is a binding site for CTP. Serine 13 contributes to the UTP binding site. Residues 14–19 (SLGKGI) and aspartate 71 contribute to the ATP site. Residues aspartate 71 and glutamate 144 each coordinate Mg(2+). Residues 151-153 (DIE), 191-196 (KTKPTQ), and lysine 227 contribute to the CTP site. Residues 191–196 (KTKPTQ) and lysine 227 contribute to the UTP site. A Glutamine amidotransferase type-1 domain is found at 295 to 547 (TIGMVGKYVD…VQAALACQQT (253 aa)). Glycine 356 serves as a coordination point for L-glutamine. Residue cysteine 383 is the Nucleophile; for glutamine hydrolysis of the active site. Residues 384-387 (LGMQ), glutamate 407, and arginine 473 contribute to the L-glutamine site. Catalysis depends on residues histidine 520 and glutamate 522.

The protein belongs to the CTP synthase family. In terms of assembly, homotetramer.

The catalysed reaction is UTP + L-glutamine + ATP + H2O = CTP + L-glutamate + ADP + phosphate + 2 H(+). The enzyme catalyses L-glutamine + H2O = L-glutamate + NH4(+). It carries out the reaction UTP + NH4(+) + ATP = CTP + ADP + phosphate + 2 H(+). Its pathway is pyrimidine metabolism; CTP biosynthesis via de novo pathway; CTP from UDP: step 2/2. Its activity is regulated as follows. Allosterically activated by GTP, when glutamine is the substrate; GTP has no effect on the reaction when ammonia is the substrate. The allosteric effector GTP functions by stabilizing the protein conformation that binds the tetrahedral intermediate(s) formed during glutamine hydrolysis. Inhibited by the product CTP, via allosteric rather than competitive inhibition. In terms of biological role, catalyzes the ATP-dependent amination of UTP to CTP with either L-glutamine or ammonia as the source of nitrogen. Regulates intracellular CTP levels through interactions with the four ribonucleotide triphosphates. In Burkholderia mallei (strain NCTC 10247), this protein is CTP synthase.